We begin with the raw amino-acid sequence, 134 residues long: MSFLKNQLSRLLALILVVAIGLTACDSGTGLTGNYSQDTLTVIATLREAIDLPQDAPNRQEVQDTARGQINDYISRYRRKGDAGGLKSFTTMQTALNSLAGYYTSYGARPIPEKLKKRLQLEFTQAERSIERGV.

The first 24 residues, 1–24, serve as a signal peptide directing secretion; it reads MSFLKNQLSRLLALILVVAIGLTA. Cysteine 25 carries the N-palmitoyl cysteine lipid modification. The S-diacylglycerol cysteine moiety is linked to residue cysteine 25.

This sequence belongs to the Psb27 family. Monomer. Forms a complex with a monomeric, partially assembled PSII. This is probably the complex in which D1 is assembled and/or replaced. Present in 6-10% of PSII complexes; mostly in monomeric PSII. These PSII do not evolve oxygen, do not have an assembled calcium-manganese-oxide cluster. Psb27-containing PSII seem to be assembly intermediates; a wild-type strain includes the intrinsic membrane proteins, Psb27, Pbs28, substoichiometric amounts of PsbO and PsbQ but no PsbU or PsbV, while a ctpA deletion mutant includes the intrinsic membrane proteins (D1 as precursor), Psb27, a very low amount of PsbO and PsbQ, but no PsbU or PsbV. Small amounts of Psb27 interact with the lumenal domain of CP43 (psbC) in wild-type and a ctpA mutant. A small amount can also be detected in monomeric and trimeric photosystem I (PSI), possibly via association with PsaB.

The protein resides in the cellular thylakoid membrane. Plays a role in the repair and/or biogenesis of the calcium-manganese-oxide cluster on the lumenal face of the thylakoid membrane. Photosystem II (PSII) complexes containing this protein are monomeric, are assembly intermediates lacking the calcium-manganese-oxide cluster and miss some of the lumenal subunits. Probably blocks binding of some of the small lumenal subunits. The protein is Photosystem II lipoprotein Psb27 of Synechocystis sp. (strain ATCC 27184 / PCC 6803 / Kazusa).